Here is a 55-residue protein sequence, read N- to C-terminus: Large ribosomal subunit protein bL33 (55 aa).

This sequence belongs to the bacterial ribosomal protein bL33 family.

The protein is Large ribosomal subunit protein bL33 of Xanthomonas axonopodis pv. citri (strain 306).